The chain runs to 453 residues: Phosphoglucosamine mutase (453 aa).

Serine 109 serves as the catalytic Phosphoserine intermediate. Mg(2+) contacts are provided by serine 109, aspartate 246, aspartate 248, and aspartate 250. Serine 109 is subject to Phosphoserine.

Belongs to the phosphohexose mutase family. It depends on Mg(2+) as a cofactor. In terms of processing, activated by phosphorylation.

It carries out the reaction alpha-D-glucosamine 1-phosphate = D-glucosamine 6-phosphate. Catalyzes the conversion of glucosamine-6-phosphate to glucosamine-1-phosphate. The polypeptide is Phosphoglucosamine mutase (Leifsonia xyli subsp. xyli (strain CTCB07)).